Reading from the N-terminus, the 340-residue chain is Mitochondrial calcium uniporter regulator 1 (340 aa).

A disordered region spans residues 1–44; that stretch reads MDSGSVAAERPRRTPSRQRLPSSGCGVPARPGVSTLPGGRSWLR. Residues 1-54 are Mitochondrial intermembrane-facing; sequence MDSGSVAAERPRRTPSRQRLPSSGCGVPARPGVSTLPGGRSWLRPRGRAARASP. A helical membrane pass occupies residues 55 to 74; it reads LLFLLLVPSPRLAATATATA. Topologically, residues 75–316 are mitochondrial matrix; the sequence is PRRTLAERSR…KTMLEAHKLD (242 aa). The stretch at 197-291 forms a coiled coil; it reads ALQQVLSKIA…VSLHAQQDRA (95 aa). N6-acetyllysine is present on K204. The chain crosses the membrane as a helical span at residues 317–339; sequence TIKYLAGSVFTCLTVALGFYRLW. A topological domain (mitochondrial intermembrane) is located at residue I340.

This sequence belongs to the CCDC90 family. In terms of assembly, interacts (via coiled coil regions) with MCU; the interaction is direct. Interacts with SMDT1/EMRE; the interaction is direct. Interacts with PPIF.

The protein localises to the mitochondrion inner membrane. Functionally, key regulator of mitochondrial calcium uniporter (MCU) required for calcium entry into mitochondrion. Plays a direct role in uniporter-mediated calcium uptake via a direct interaction with MCU. Probably involved in the assembly of the membrane components of the uniporter complex (uniplex). This chain is Mitochondrial calcium uniporter regulator 1, found in Mus musculus (Mouse).